We begin with the raw amino-acid sequence, 104 residues long: Large ribosomal subunit protein uL23 (104 aa).

Belongs to the universal ribosomal protein uL23 family. In terms of assembly, part of the 50S ribosomal subunit. Contacts protein L29, and trigger factor when it is bound to the ribosome.

One of the early assembly proteins it binds 23S rRNA. One of the proteins that surrounds the polypeptide exit tunnel on the outside of the ribosome. Forms the main docking site for trigger factor binding to the ribosome. This chain is Large ribosomal subunit protein uL23, found in Burkholderia multivorans (strain ATCC 17616 / 249).